A 1050-amino-acid polypeptide reads, in one-letter code: DNA polymerase I A, chloroplastic/mitochondrial (1050 aa).

A chloroplast and mitochondrion-targeting transit peptide spans 1–91 (MAMGVSLTSH…VVFNGEWELR (91 aa)). The segment at 202–240 (PRKGLDVGDNMDVNPKGEGIQRPLISDKSSGTANGNKNT) is disordered. Residues 228-240 (DKSSGTANGNKNT) are compositionally biased toward polar residues. The 3'-5' exonuclease domain maps to 312–490 (ELICFSIYCG…LYESMTKKLQ (179 aa)). A disordered region spans residues 673–694 (VVEDDDVETSETQKSKTDDETD). Residues 717-1048 (AIASLCEVCS…DAKCAQNWYA (332 aa)) form a polymerase region.

This sequence belongs to the DNA polymerase type-A family. Expressed in shoot apical meristem.

Its subcellular location is the plastid. It is found in the chloroplast. It localises to the mitochondrion. It carries out the reaction DNA(n) + a 2'-deoxyribonucleoside 5'-triphosphate = DNA(n+1) + diphosphate. Its activity is regulated as follows. Not inhibited by aphidicolin. Functionally, in addition to polymerase activity, this DNA polymerase exhibits 5'-3' exonuclease activity. Required for DNA replication and accumulation in plastids and mitochondria. May be required for DNA repair in both organelles. This chain is DNA polymerase I A, chloroplastic/mitochondrial (POLIA), found in Arabidopsis thaliana (Mouse-ear cress).